Reading from the N-terminus, the 589-residue chain is MGKKSRVKTQKSGTGATATVSPKEILSLTSELLQKCSSPAPGPGKEWEEYVQIRSLVEKIRKKQKGLSVIFDGKREDYFPDLMKWASENGASVEGFEMVNFKEEGFGLRATRDIKAEELFLWVPRKLLMTVESAKNSMLGPLYSQDRILQAMGNITLAFHLLCERANPNSFWQPYIQSLPGEYDTPLYFEEDEVRYLHSTQAIHDVFSQYKNTARQYAYFYKVIQTHPHANKLPLKDSFTYEDYRWAVSSVMTRQNQIPTEDGSRVTLALIPLWDMCNHTNGLITTGYNLEDDRCECVALQDFRAGEQIYIFYGTRSNAEFVIHSGFFFDNNSHDRVKIKLGVSKSDRLYAMKAEVLARAGIPTSSVFALHFTEPPISAQLLAFLRVFCMTEEELKEHLLGENAIDRIFTLGNSEFPVSWDNEVKLWTFLEDRASLLLKTYKTTIEEDKSFLKNHDLSVRATMAIKLRLGEKEILEKAVKSAAVNREYFRKQMEDKAPLPRYEESNLGLLESSVADSSLPLVLRNLEEEVGVQEALAIQAEANENGLVNGERSFPNGTRSEEDLKQEERKRAKGDAKESSSDSTDAVKE.

Residues 1–22 (MGKKSRVKTQKSGTGATATVSP) form a disordered region. The segment covering 10 to 20 (QKSGTGATATV) has biased composition (polar residues). Residues Arg75, 104–106 (EGF), Arg254, 275–279 (DMCNH), and 325–327 (SGF) contribute to the S-adenosyl-L-methionine site. The region spanning 94 to 314 (EGFEMVNFKE…AGEQIYIFYG (221 aa)) is the SET domain. Ser513 is subject to Phosphoserine. Residues 547–589 (LVNGERSFPNGTRSEEDLKQEERKRAKGDAKESSSDSTDAVKE) form a disordered region. Positions 559–589 (RSEEDLKQEERKRAKGDAKESSSDSTDAVKE) are enriched in basic and acidic residues.

The protein belongs to the class V-like SAM-binding methyltransferase superfamily. SETD3 actin-histidine methyltransferase family. As to quaternary structure, interacts with MYOD1. Post-translationally, phosphorylated by GSK3B, which is required for recognition by the SCF(FBXW7) complex and subsequent degradation. Ubiquitinated by the SCF(FBXW7) complex following phosphorylation by GSK3B, leading to its degradation by the proteasome.

It is found in the cytoplasm. The protein localises to the nucleus. The enzyme catalyses L-histidyl-[protein] + S-adenosyl-L-methionine = N(tele)-methyl-L-histidyl-[protein] + S-adenosyl-L-homocysteine + H(+). Its function is as follows. Protein-histidine N-methyltransferase that specifically mediates 3-methylhistidine (tele-methylhistidine) methylation of actin at 'His-73'. Histidine methylation of actin is required for smooth muscle contraction of the laboring uterus during delivery. Does not have protein-lysine N-methyltransferase activity and probably only catalyzes histidine methylation of actin. The chain is Actin-histidine N-methyltransferase from Dasypus novemcinctus (Nine-banded armadillo).